The primary structure comprises 135 residues: Succinate dehydrogenase assembly factor 2, mitochondrial (135 aa).

It belongs to the SDHAF2 family. As to quaternary structure, interacts with the flavoprotein subunit within the SDH catalytic dimer.

Its subcellular location is the mitochondrion matrix. In terms of biological role, plays an essential role in the assembly of succinate dehydrogenase (SDH), an enzyme complex (also referred to as respiratory complex II) that is a component of both the tricarboxylic acid (TCA) cycle and the mitochondrial electron transport chain, and which couples the oxidation of succinate to fumarate with the reduction of ubiquinone (coenzyme Q) to ubiquinol. Required for flavinylation (covalent attachment of FAD) of the flavoprotein subunit of the SDH catalytic dimer. The sequence is that of Succinate dehydrogenase assembly factor 2, mitochondrial from Meyerozyma guilliermondii (strain ATCC 6260 / CBS 566 / DSM 6381 / JCM 1539 / NBRC 10279 / NRRL Y-324) (Yeast).